A 113-amino-acid chain; its full sequence is DNA-directed RNA polymerase subunit omega (113 aa).

The protein belongs to the RNA polymerase subunit omega family. As to quaternary structure, the RNAP catalytic core consists of 2 alpha, 1 beta, 1 beta' and 1 omega subunit. When a sigma factor is associated with the core the holoenzyme is formed, which can initiate transcription.

The catalysed reaction is RNA(n) + a ribonucleoside 5'-triphosphate = RNA(n+1) + diphosphate. Promotes RNA polymerase assembly. Latches the N- and C-terminal regions of the beta' subunit thereby facilitating its interaction with the beta and alpha subunits. This Rhizorhabdus wittichii (strain DSM 6014 / CCUG 31198 / JCM 15750 / NBRC 105917 / EY 4224 / RW1) (Sphingomonas wittichii) protein is DNA-directed RNA polymerase subunit omega.